The chain runs to 1179 residues: MVPRRPASLEVTVACIWLLTVILGVCISFNVDVKNSMSFSGPVEDMFGYTVQQYENEEGKWVLIGSPLVGQPKARTGDVYKCPVGRERSMPCVKLDLPVNTSIPNVTEIKENMTFGSTLVTNPKGGFLACGPLYAYRCGHLHYTTGICSDVSPTFQVVNSFAPVQECSTQLDIVIVLDGSNSIYPWESVTAFLNDLLKRMDIGPKQTQVGIVQYGANVTHEFNLNKYSSTEEVLVAANKIGRRGGLQTMTALGIDTARKEAFTEARGARRGVKKVMVIVTDGESHDNYRLKQVIQDCEDENIQRFSIAILGHYNRGNLSTEKFVEEIKSIASEPTEKHFFNVSDELALVTIVKALGERIFALEATADQSAASFEMEMSQTGFSAHYSQDWVMLGAVGAYDWNGTVVMQKANQIVIPHNTTFQTEPTKMNEPLASYLGYTVNSATIPGDVLYIAGQPRYNHTGQVVIYKMEDGDVNILQTLSGEQIGSYFGSVLTTIDIDKDSYTDLLLVGAPMYMGTEKEEQGKVYVYAVNQTRFEYQMSLEPIKQTCCSSLKDNSCTKENKNEPCGARFGTAVAAVKDLNVDGFNDVVIGAPLEDDHAGAVYIYHGSGKTIRKEYAQRIPSGGDGKTLKFFGQSIHGEMDLNGDGLTDVTIGGLGGAALFWARDVAVVKVTMNFEPNKVNIQKKNCRVEGKETVCINATMCFHVKLKSKEDSVYEADLQYRVTLDSLRQISRSFFSGTQERRIQRNLTVRESECIRHSFYMLDKHDFQDSVRVTLDFNLTDPENGPVLDDALPNSVHGHIPFAKDCGNKERCVSDLTLDVSTTEKNLLIVRSQNDKFNVSLTVKNKGDSAYNTRTVVQYSPNLIFSGIEEIQKDSCESNQNITCRVGYPFLRTGDVVNFKIIFQFNTSHLSENAIIHLSATSDSEEPLESLYDNEVNISIPVKYEVGLQFYSSASEHHISVAANETVPELINSTKDIGDEINVFYTIRKRGHFPMPELRLAISFPNLTSDGYPVLYPTGWSSSDNVNCRPRSLEDPLGINSGKKMTISKSEVLKRGTIQDCSTCKIATITCHLLPSDVSQVNVSLILWKPTFIKAHFSSLNLTIRGELQSENSSLTLSSSNRKRELAIQISKDGLPGRVPLWVILLSAFAGLLLLMLLILALWKIGFFKRPLKKKMEK.

The first 28 residues, 1 to 28 (MVPRRPASLEVTVACIWLLTVILGVCIS), serve as a signal peptide directing secretion. Residues 29-1141 (FNVDVKNSMS…SKDGLPGRVP (1113 aa)) lie on the Extracellular side of the membrane. The FG-GAP 1 repeat unit spans residues 30-91 (NVDVKNSMSF…CPVGRERSMP (62 aa)). Cysteines 82 and 92 form a disulfide. Residues Asn-100, Asn-105, Asn-112, Asn-217, Asn-317, Asn-341, Asn-402, Asn-418, and Asn-459 are each glycosylated (N-linked (GlcNAc...) asparagine). An FG-GAP 2 repeat occupies 101 to 160 (TSIPNVTEIKENMTFGSTLVTNPKGGFLACGPLYAYRCGHLHYTTGICSDVSPTFQVVNS). The VWFA domain occupies 175 to 364 (IVLDGSNSIY…LGERIFALEA (190 aa)). An FG-GAP 3 repeat occupies 365-417 (TADQSAASFEMEMSQTGFSAHYSQDWVMLGAVGAYDWNGTVVMQKANQIVIPH). FG-GAP repeat units lie at residues 422–474 (QTEP…DGDV), 475–537 (NILQ…RFEY), 556–614 (SCTK…TIRK), and 618–678 (QRIP…FEPN). 4 residues coordinate Ca(2+): Asp-497, Asp-499, Asp-501, and Asp-505. A glycan (N-linked (GlcNAc...) asparagine) is linked at Asn-531. Ca(2+) contacts are provided by Asp-579, Asn-581, Asp-583, Asp-587, Asp-641, Asn-643, Asp-645, and Asp-649. An intrachain disulfide couples Cys-687 to Cys-696. 3 N-linked (GlcNAc...) asparagine glycosylation sites follow: Asn-698, Asn-747, and Asn-779. The cysteines at positions 702 and 755 are disulfide-linked. A disulfide bridge connects residues Cys-807 and Cys-813. Residues Asn-839, Asn-882, Asn-907, Asn-938, Asn-965, Asn-973, and Asn-1007 are each glycosylated (N-linked (GlcNAc...) asparagine). Cys-877 and Cys-885 are oxidised to a cystine. Disulfide bonds link Cys-1029/Cys-1062 and Cys-1065/Cys-1072. N-linked (GlcNAc...) asparagine glycans are attached at residues Asn-1083, Asn-1102, and Asn-1113. Residues 1142 to 1164 (LWVILLSAFAGLLLLMLLILALW) traverse the membrane as a helical segment. At 1165–1179 (KIGFFKRPLKKKMEK) the chain is on the cytoplasmic side. The GFFKR motif signature appears at 1167–1171 (GFFKR).

Belongs to the integrin alpha chain family. As to quaternary structure, heterodimer of an alpha and a beta subunit. Alpha-1 associates with beta-1. Interacts with RAB21. Interacts (via cytoplasmic domain) with PTPN2; activates PTPN2 phosphatase activity towards EGFR and negatively regulates EGF signaling.

Its subcellular location is the membrane. Functionally, integrin alpha-1/beta-1 is a receptor for laminin and collagen. It recognizes the proline-hydroxylated sequence G-F-P-G-E-R in collagen. Involved in anchorage-dependent, negative regulation of EGF-stimulated cell growth. The polypeptide is Integrin alpha-1 (Itga1) (Mus musculus (Mouse)).